The sequence spans 195 residues: 3-hydroxyanthranilate 3,4-dioxygenase (195 aa).

Residue Arg50 coordinates O2. Positions 54, 60, and 102 each coordinate Fe cation. Glu60 serves as a coordination point for substrate. Substrate is bound by residues Arg106 and Glu116. Cys131, Cys136, Cys170, and Cys173 together coordinate a divalent metal cation.

It belongs to the 3-HAO family. The cofactor is Fe(2+).

It is found in the cytoplasm. The catalysed reaction is 3-hydroxyanthranilate + O2 = (2Z,4Z)-2-amino-3-carboxymuconate 6-semialdehyde. It participates in cofactor biosynthesis; NAD(+) biosynthesis; quinolinate from L-kynurenine: step 3/3. In terms of biological role, catalyzes the oxidative ring opening of 3-hydroxyanthranilate to 2-amino-3-carboxymuconate semialdehyde, which spontaneously cyclizes to quinolinate. The sequence is that of 3-hydroxyanthranilate 3,4-dioxygenase (bna1) from Aspergillus terreus (strain NIH 2624 / FGSC A1156).